We begin with the raw amino-acid sequence, 503 residues long: UDP-N-acetylmuramate--L-alanine ligase (503 aa).

Residue 120–126 (GTHGKTS) coordinates ATP.

Belongs to the MurCDEF family.

The protein resides in the cytoplasm. It carries out the reaction UDP-N-acetyl-alpha-D-muramate + L-alanine + ATP = UDP-N-acetyl-alpha-D-muramoyl-L-alanine + ADP + phosphate + H(+). Its pathway is cell wall biogenesis; peptidoglycan biosynthesis. In terms of biological role, cell wall formation. This Rhodococcus jostii (strain RHA1) protein is UDP-N-acetylmuramate--L-alanine ligase.